The chain runs to 61 residues: Cytotoxin 2 (61 aa).

Intrachain disulfides connect cysteine 3/cysteine 22, cysteine 15/cysteine 39, cysteine 43/cysteine 54, and cysteine 55/cysteine 60.

It belongs to the three-finger toxin family. Short-chain subfamily. Type IB cytotoxin sub-subfamily. In terms of tissue distribution, expressed by the venom gland.

The protein resides in the secreted. Its function is as follows. This protein lyses red blood cells, has cytotoxic activity and induces hypotension, but is not neurotoxic. In addition, it induces direct paralysis of the muscle fiber. This is Cytotoxin 2 from Hemachatus haemachatus (Rinkhals).